A 440-amino-acid chain; its full sequence is Xylose isomerase (440 aa).

Mg(2+)-binding residues include Asp-307 and Asp-309.

The protein belongs to the xylose isomerase family. Homotetramer. The cofactor is Mg(2+).

The protein resides in the cytoplasm. It catalyses the reaction alpha-D-xylose = alpha-D-xylulofuranose. The sequence is that of Xylose isomerase from Escherichia coli (strain K12 / MC4100 / BW2952).